Here is a 405-residue protein sequence, read N- to C-terminus: Aspartokinase (405 aa).

ACT domains follow at residues 267–344 and 345–405; these read VSME…AKVS and IVGV…QLDQ.

This sequence belongs to the aspartokinase family.

It carries out the reaction L-aspartate + ATP = 4-phospho-L-aspartate + ADP. It functions in the pathway amino-acid biosynthesis; L-lysine biosynthesis via DAP pathway; (S)-tetrahydrodipicolinate from L-aspartate: step 1/4. Its pathway is amino-acid biosynthesis; L-methionine biosynthesis via de novo pathway; L-homoserine from L-aspartate: step 1/3. The protein operates within amino-acid biosynthesis; L-threonine biosynthesis; L-threonine from L-aspartate: step 1/5. The chain is Aspartokinase (lysC) from Helicobacter pylori (strain ATCC 700392 / 26695) (Campylobacter pylori).